We begin with the raw amino-acid sequence, 91 residues long: Small ribosomal subunit protein uS19 (91 aa).

The protein belongs to the universal ribosomal protein uS19 family.

Protein S19 forms a complex with S13 that binds strongly to the 16S ribosomal RNA. This is Small ribosomal subunit protein uS19 from Burkholderia cenocepacia (strain HI2424).